The following is a 96-amino-acid chain: Probable quinol oxidase subunit 4 (96 aa).

The next 3 helical transmembrane spans lie at 8 to 28 (TVGF…TLYT), 36 to 56 (LTII…MFMH), and 68 to 88 (FKVI…YWVM).

This sequence belongs to the cytochrome c oxidase bacterial subunit 4 family.

It localises to the cell membrane. The catalysed reaction is 2 a quinol + O2 = 2 a quinone + 2 H2O. Its function is as follows. Catalyzes quinol oxidation with the concomitant reduction of oxygen to water. This is Probable quinol oxidase subunit 4 (qoxD) from Staphylococcus aureus (strain USA300).